We begin with the raw amino-acid sequence, 383 residues long: Erythronate-4-phosphate dehydrogenase (383 aa).

Substrate-binding residues include S45 and T67. D147 is a binding site for NAD(+). Residue R208 is part of the active site. D232 serves as a coordination point for NAD(+). E237 is an active-site residue. The Proton donor role is filled by H254. G257 serves as a coordination point for NAD(+). A substrate-binding site is contributed by Y258.

It belongs to the D-isomer specific 2-hydroxyacid dehydrogenase family. PdxB subfamily. Homodimer.

The protein localises to the cytoplasm. It catalyses the reaction 4-phospho-D-erythronate + NAD(+) = (R)-3-hydroxy-2-oxo-4-phosphooxybutanoate + NADH + H(+). It functions in the pathway cofactor biosynthesis; pyridoxine 5'-phosphate biosynthesis; pyridoxine 5'-phosphate from D-erythrose 4-phosphate: step 2/5. In terms of biological role, catalyzes the oxidation of erythronate-4-phosphate to 3-hydroxy-2-oxo-4-phosphonooxybutanoate. The chain is Erythronate-4-phosphate dehydrogenase from Psychromonas ingrahamii (strain DSM 17664 / CCUG 51855 / 37).